A 917-amino-acid polypeptide reads, in one-letter code: Chitin synthase 1 (917 aa).

Basic and acidic residues predominate over residues 1 to 11 (MAYHGRGDGYD). The interval 1–56 (MAYHGRGDGYDGHQLQDLPGGHNQGDQHDDAQAPFLSENPMPYDNDRLGTDTPPVR) is disordered. The Extracellular segment spans residues 1–570 (MAYHGRGDGY…YKSGHNIVRM (570 aa)). N-linked (GlcNAc...) asparagine glycosylation occurs at Asn544. The chain crosses the membrane as a helical span at residues 571–591 (FFFHVQLIYNIANVIFTWFSL). Residues 592 to 629 (ASYWLTTTVIMDLVGTPVTASSSSAEHHGWPFGDTVTP) lie on the Cytoplasmic side of the membrane. The helical transmembrane segment at 630–650 (FFNAVLKYIYLAFVILQFILA) threads the bilayer. Residues 651–664 (LGNRPKGSKWTYIT) are Extracellular-facing. A helical transmembrane segment spans residues 665–685 (SFFVFSLIQSYILVLSGYLVA). Over 686 to 716 (RAFSVPLDQQLQLDNAKDAMASLFGGSGSAG) the chain is Cytoplasmic. A helical membrane pass occupies residues 717 to 737 (VILVALVTIYGLYFLASFMYL). Topologically, residues 738–744 (DPWHMFH) are extracellular. Residues 745–765 (SFPYYMLLMSTYINILMIYAF) form a helical membrane-spanning segment. Topologically, residues 766–843 (NNWHDVSWGT…DLEDSYKSFR (78 aa)) are cytoplasmic. The helical transmembrane segment at 844-864 (TMLVVSWLFSNCLLAVVITSD) threads the bilayer. At 865–884 (NFNTFGIGQTASARTAWFFK) the chain is on the extracellular side. Residues 885-905 (FLLFATGALSVIRFIGFCWFL) traverse the membrane as a helical segment. Residues 906 to 917 (GRTGIMCCFARR) are Cytoplasmic-facing.

This sequence belongs to the chitin synthase family. Class III subfamily.

The protein resides in the cell membrane. It catalyses the reaction [(1-&gt;4)-N-acetyl-beta-D-glucosaminyl](n) + UDP-N-acetyl-alpha-D-glucosamine = [(1-&gt;4)-N-acetyl-beta-D-glucosaminyl](n+1) + UDP + H(+). Functionally, polymerizes chitin, a structural polymer of the cell wall and septum, by transferring the sugar moiety of UDP-GlcNAc to the non-reducing end of the growing chitin polymer. This chain is Chitin synthase 1 (chs-1), found in Neurospora crassa (strain ATCC 24698 / 74-OR23-1A / CBS 708.71 / DSM 1257 / FGSC 987).